We begin with the raw amino-acid sequence, 415 residues long: Gamma-glutamyl phosphate reductase (415 aa).

It belongs to the gamma-glutamyl phosphate reductase family.

The protein resides in the cytoplasm. The enzyme catalyses L-glutamate 5-semialdehyde + phosphate + NADP(+) = L-glutamyl 5-phosphate + NADPH + H(+). It functions in the pathway amino-acid biosynthesis; L-proline biosynthesis; L-glutamate 5-semialdehyde from L-glutamate: step 2/2. In terms of biological role, catalyzes the NADPH-dependent reduction of L-glutamate 5-phosphate into L-glutamate 5-semialdehyde and phosphate. The product spontaneously undergoes cyclization to form 1-pyrroline-5-carboxylate. The sequence is that of Gamma-glutamyl phosphate reductase from Ligilactobacillus salivarius (strain UCC118) (Lactobacillus salivarius).